Consider the following 417-residue polypeptide: Leucine-rich repeat-containing protein 42 (417 aa).

LRR repeat units lie at residues 167-188, 195-215, 227-248, and 252-273; these read CLHSLDLSCCKLGDEHELLAHL, SLTELYLKDNCLSNIGIQKMT, KLKVLDLSSNPGITDRGVCFLF, and LLKFLDLSDTSIQDPSGTLKKI. The segment at 360 to 390 is disordered; sequence FFRPKEQKDPDSSNSEKRRHSTKRTGADCVQ. The span at 362 to 375 shows a compositional bias: basic and acidic residues; it reads RPKEQKDPDSSNSE.

It belongs to the LRRC42 family.

The chain is Leucine-rich repeat-containing protein 42 (lrrc42) from Xenopus laevis (African clawed frog).